Here is a 70-residue protein sequence, read N- to C-terminus: Large ribosomal subunit protein bL31 (70 aa).

Residue lysine 8 is modified to N6-acetyllysine. Zn(2+) contacts are provided by cysteine 16, cysteine 18, cysteine 37, and cysteine 40.

The protein belongs to the bacterial ribosomal protein bL31 family. Type A subfamily. Part of the 50S ribosomal subunit. It depends on Zn(2+) as a cofactor.

Functionally, binds the 23S rRNA. This chain is Large ribosomal subunit protein bL31, found in Escherichia coli O6:K15:H31 (strain 536 / UPEC).